Here is a 188-residue protein sequence, read N- to C-terminus: NADH-quinone oxidoreductase subunit B 1 (188 aa).

The [4Fe-4S] cluster site is built by Cys32, Cys33, Cys98, and Cys128. Residues 153–188 (VGGVSRPDALASPADALPPRAADSLTAPPVRPPDPS) form a disordered region. Residues 157–177 (SRPDALASPADALPPRAADSL) show a composition bias toward low complexity.

The protein belongs to the complex I 20 kDa subunit family. As to quaternary structure, NDH-1 is composed of 14 different subunits. Subunits NuoB, C, D, E, F, and G constitute the peripheral sector of the complex. Requires [4Fe-4S] cluster as cofactor.

The protein resides in the cell membrane. It catalyses the reaction a quinone + NADH + 5 H(+)(in) = a quinol + NAD(+) + 4 H(+)(out). NDH-1 shuttles electrons from NADH, via FMN and iron-sulfur (Fe-S) centers, to quinones in the respiratory chain. The immediate electron acceptor for the enzyme in this species is believed to be a menaquinone. Couples the redox reaction to proton translocation (for every two electrons transferred, four hydrogen ions are translocated across the cytoplasmic membrane), and thus conserves the redox energy in a proton gradient. In Salinispora tropica (strain ATCC BAA-916 / DSM 44818 / JCM 13857 / NBRC 105044 / CNB-440), this protein is NADH-quinone oxidoreductase subunit B 1 (nuoB1).